Reading from the N-terminus, the 64-residue chain is Beta-defensin 1 (64 aa).

The first 20 residues, Met1–Gly20, serve as a signal peptide directing secretion. The propeptide occupies Leu21–Lys23. 3 disulfides stabilise this stretch: Cys31/Cys60, Cys38/Cys53, and Cys43/Cys61.

It belongs to the beta-defensin family. Monomer. Homodimer.

Its subcellular location is the secreted. It localises to the membrane. Has bactericidal activity. May act as a ligand for C-C chemokine receptor CCR6. Positively regulates the sperm motility and bactericidal activity in a CCR6-dependent manner. Binds to CCR6 and triggers Ca2+ mobilization in the sperm which is important for its motility. This chain is Beta-defensin 1 (DEFB1), found in Sus scrofa (Pig).